A 229-amino-acid chain; its full sequence is Putative N-acetylmannosamine-6-phosphate 2-epimerase (229 aa).

The protein belongs to the NanE family.

It carries out the reaction an N-acyl-D-glucosamine 6-phosphate = an N-acyl-D-mannosamine 6-phosphate. It participates in amino-sugar metabolism; N-acetylneuraminate degradation; D-fructose 6-phosphate from N-acetylneuraminate: step 3/5. Its function is as follows. Converts N-acetylmannosamine-6-phosphate (ManNAc-6-P) to N-acetylglucosamine-6-phosphate (GlcNAc-6-P). This chain is Putative N-acetylmannosamine-6-phosphate 2-epimerase, found in Actinobacillus pleuropneumoniae serotype 5b (strain L20).